Here is a 434-residue protein sequence, read N- to C-terminus: Serine--tRNA ligase (434 aa).

237–239 (TAE) contacts L-serine. 268 to 270 (RAE) contributes to the ATP binding site. Glu291 contributes to the L-serine binding site. ATP is bound at residue 358-361 (EISS). Ser393 contributes to the L-serine binding site.

Belongs to the class-II aminoacyl-tRNA synthetase family. Type-1 seryl-tRNA synthetase subfamily. As to quaternary structure, homodimer. The tRNA molecule binds across the dimer.

The protein localises to the cytoplasm. It carries out the reaction tRNA(Ser) + L-serine + ATP = L-seryl-tRNA(Ser) + AMP + diphosphate + H(+). The catalysed reaction is tRNA(Sec) + L-serine + ATP = L-seryl-tRNA(Sec) + AMP + diphosphate + H(+). The protein operates within aminoacyl-tRNA biosynthesis; selenocysteinyl-tRNA(Sec) biosynthesis; L-seryl-tRNA(Sec) from L-serine and tRNA(Sec): step 1/1. Functionally, catalyzes the attachment of serine to tRNA(Ser). Is also able to aminoacylate tRNA(Sec) with serine, to form the misacylated tRNA L-seryl-tRNA(Sec), which will be further converted into selenocysteinyl-tRNA(Sec). The sequence is that of Serine--tRNA ligase from Rhodopseudomonas palustris (strain ATCC BAA-98 / CGA009).